We begin with the raw amino-acid sequence, 277 residues long: Large ribosomal subunit protein uL2 (277 aa).

The tract at residues 219-277 (RPQTRGSAMNPVDHPHGGGEGKKNSGRHPVTPWGKPTKGAKTRRKKASDKLIISRRKGK) is disordered. Over residues 231-241 (DHPHGGGEGKK) the composition is skewed to basic and acidic residues. Positions 256–277 (KGAKTRRKKASDKLIISRRKGK) are enriched in basic residues.

Belongs to the universal ribosomal protein uL2 family. As to quaternary structure, part of the 50S ribosomal subunit. Forms a bridge to the 30S subunit in the 70S ribosome.

Its function is as follows. One of the primary rRNA binding proteins. Required for association of the 30S and 50S subunits to form the 70S ribosome, for tRNA binding and peptide bond formation. It has been suggested to have peptidyltransferase activity; this is somewhat controversial. Makes several contacts with the 16S rRNA in the 70S ribosome. The polypeptide is Large ribosomal subunit protein uL2 (Campylobacter concisus (strain 13826)).